A 119-amino-acid polypeptide reads, in one-letter code: Developmental pluripotency-associated protein 5B/5C (119 aa).

A KH; atypical domain is found at 24–86; it reads PEVFQVQSLV…SIKVRAKWLL (63 aa).

Belongs to the KHDC1 family.

It is found in the cytoplasm. Its function is as follows. Involved in the maintenance of embryonic stem (ES) cell pluripotency. Dispensable for self-renewal of pluripotent ES cells and establishment of germ cells. Associates with specific target mRNAs. This chain is Developmental pluripotency-associated protein 5B/5C, found in Mus musculus (Mouse).